Reading from the N-terminus, the 165-residue chain is Endoribonuclease YbeY (165 aa).

Zn(2+) contacts are provided by His-130, His-134, and His-140.

The protein belongs to the endoribonuclease YbeY family. Zn(2+) serves as cofactor.

Its subcellular location is the cytoplasm. In terms of biological role, single strand-specific metallo-endoribonuclease involved in late-stage 70S ribosome quality control and in maturation of the 3' terminus of the 16S rRNA. In Streptococcus pneumoniae serotype 4 (strain ATCC BAA-334 / TIGR4), this protein is Endoribonuclease YbeY.